The following is a 464-amino-acid chain: MTVVSVEHALAGKLPEGGEVTVRGWVRTLRGSAGLAFINVTDGSCFAPIQVVANDTLPNFDEIKRLTSGCSLIAKGVLVKSQGKGQSFEIQASGVEIVGWVEDPLTYPIQPKPMTPEFLREVAHLRPRTNLFGAVTRIRNCLAQAVHRFFHQNGFNWISTPIITTSDAEGAGQMFRVSTLDMVNLPRDASGNVDFSRDFFGKETFLTVSGQLNVEAYCLALSKVYTFGPTFRAENSHTTRHLAEFWMIEPEIAFADLAEDARLAEQFLKYLFRAVLDERGDDLAFLAERVDKNAITKLEAFINAPFEQIDYTEAVKLLQNSGKKFDFPVEWGLDLQTEHERWLTEEHIGRPVVVTNYPEHIKAFYMRLNDDGKTVAAMDVLAPGIGEIIGGSQREERLDVLDARMAQFGLDKEHYSWYRDFRRYGSVPHAGFGLGFERLVVYVCGLSNIRDAIPYPRAPGSAEF.

This sequence belongs to the class-II aminoacyl-tRNA synthetase family. As to quaternary structure, homodimer.

Its subcellular location is the cytoplasm. The enzyme catalyses tRNA(Asn) + L-asparagine + ATP = L-asparaginyl-tRNA(Asn) + AMP + diphosphate + H(+). This Xanthomonas euvesicatoria pv. vesicatoria (strain 85-10) (Xanthomonas campestris pv. vesicatoria) protein is Asparagine--tRNA ligase.